Reading from the N-terminus, the 353-residue chain is Mannonate dehydratase (353 aa).

Belongs to the mannonate dehydratase family. Fe(2+) serves as cofactor. Requires Mn(2+) as cofactor.

It carries out the reaction D-mannonate = 2-dehydro-3-deoxy-D-gluconate + H2O. The protein operates within carbohydrate metabolism; pentose and glucuronate interconversion. Its function is as follows. Catalyzes the dehydration of D-mannonate. This Burkholderia cenocepacia (strain ATCC BAA-245 / DSM 16553 / LMG 16656 / NCTC 13227 / J2315 / CF5610) (Burkholderia cepacia (strain J2315)) protein is Mannonate dehydratase.